Reading from the N-terminus, the 1021-residue chain is Probable calcium-transporting ATPase 6, plasma membrane-type (1021 aa).

At 1 to 155 (MEGGRSWSIE…RSFWMFVWDA (155 aa)) the chain is on the cytoplasmic side. 2 consecutive transmembrane segments (helical) span residues 156–176 (LHDLTLIILVVCALVSIVVGL) and 181–201 (WPMGIYDGFGIILSILLVVLV). Topologically, residues 202–241 (TATSDYQQARKFMELDREKQKIYIRVTRDKKTKEVLVHDL) are cytoplasmic. 2 consecutive transmembrane segments (helical) span residues 242-262 (VVGDILHLSIGDVVPADGLFI) and 338-358 (VATIIGQIGLVFAVLTFLVLL). The Cytoplasmic segment spans residues 359-384 (ARFLADKGMHVGLLNWSANDALTIVN). A helical transmembrane segment spans residues 385 to 405 (YFAIAVTIIVVAVPEGLPLAV). The 4-aspartylphosphate intermediate role is filled by Asp-441. Mg(2+) contacts are provided by Asp-740 and Asp-744. The chain crosses the membrane as a helical span at residues 807-827 (IVALIVNFVSACIIGSAPLTA). Residues 828–829 (VQ) lie on the Cytoplasmic side of the membrane. Transmembrane regions (helical) follow at residues 830–850 (LLWVNMIMDTLGALALATEPP) and 879–899 (GLYQLLVLATLMVIGKKLLSI). The Cytoplasmic portion of the chain corresponds to 900–942 (EGPQSDKTINTLIFNSFVFCQVFNEINCREMEKINVLQGIFRN). The next 2 membrane-spanning stretches (helical) occupy residues 943–963 (WIFVGILTATVIFQVIIVEFL) and 974–994 (GELWLLSVVIGSISMIISVIL). The Cytoplasmic segment spans residues 995–1021 (KCIPVEFNKTNTKPHGYELIPEGPEIL).

Belongs to the cation transport ATPase (P-type) (TC 3.A.3) family. Type IIB subfamily.

The protein resides in the membrane. It catalyses the reaction Ca(2+)(in) + ATP + H2O = Ca(2+)(out) + ADP + phosphate + H(+). With respect to regulation, activated by calmodulin. Functionally, this magnesium-dependent enzyme catalyzes the hydrolysis of ATP coupled with the translocation of calcium from the cytosol out of the cell, into the endoplasmic reticulum, or into organelles. In Oryza sativa subsp. japonica (Rice), this protein is Probable calcium-transporting ATPase 6, plasma membrane-type.